A 530-amino-acid chain; its full sequence is Laccase-2 (530 aa).

Positions 1-23 are cleaved as a signal peptide; sequence MLLSSAFVGSCLAILNFAAAVSA. Plastocyanin-like domains are found at residues 36-154 and 167-311; these read NKVI…YDPE and TTII…RYTN. N-linked (GlcNAc...) asparagine glycosylation is present at Asn82. Residues His88 and His90 each contribute to the Cu cation site. Intrachain disulfides connect Cys109/Cys520 and Cys141/Cys228. The N-linked (GlcNAc...) asparagine glycan is linked to Asn120. Residues His133 and His135 each coordinate Cu cation. Residues Asn191, Asn240, Asn292, Asn311, Asn366, Asn375, Asn392, and Asn412 are each glycosylated (N-linked (GlcNAc...) asparagine). Residues 379–504 form the Plastocyanin-like 3 domain; that stretch reads YVNPTVPVLL…FAVVLAEAPQ (126 aa). The Cu cation site is built by His428, His431, His433, His484, Cys485, His486, and His490.

This sequence belongs to the multicopper oxidase family. It depends on Cu cation as a cofactor.

The protein localises to the secreted. It carries out the reaction 4 hydroquinone + O2 = 4 benzosemiquinone + 2 H2O. With respect to regulation, inhibited by chloride ions. Inhibited by citrate. Inhibited by oxalate. Activated by acetate. Functionally, in vitro, has activity towards 2,2'-azino-bis(3-ethylbenzthiazoline-6-sulfonic acid) (ABTS), 2,6-dimethoxy-phenol, and guaiacol. Although brown rot fungi preferentially degrade hemicellulose and cellulose, the enzyme may contribute to generating small amounts of lignin breakdown products required for catalytic reactions. The chain is Laccase-2 from Fomitopsis schrenkii (Brown rot fungus).